Consider the following 216-residue polypeptide: Transcriptional regulatory protein RcsB (216 aa).

Positions 5–124 (NVIIADDHPI…DLPKALAALQ (120 aa)) constitute a Response regulatory domain. Aspartate 56 carries the post-translational modification 4-aspartylphosphate. An HTH luxR-type domain is found at 144–209 (GGYGDKRLSP…ALLNYLSSVT (66 aa)). A DNA-binding region (H-T-H motif) is located at residues 168–187 (VTEIAKKLNRSIKTISSQKK).

Belongs to the RcsB family. As to quaternary structure, interacts with RcsD and RcsA. Post-translationally, phosphorylated and activated by RcsD.

In terms of biological role, component of the Rcs signaling system, which controls transcription of numerous genes. RcsB is the response regulator that binds to regulatory DNA regions. Can function both in an RcsA-dependent or RcsA-independent manner. This Escherichia coli O157:H7 protein is Transcriptional regulatory protein RcsB.